Consider the following 1168-residue polypeptide: TBC1 domain family member 1 (1168 aa).

Ser-146 is subject to Phosphoserine. Positions 203 to 238 are disordered; it reads VSGSRGSESPRPNPPHAAPTGSQEPVRRPMRKSFSQ. At Ser-235 the chain carries Phosphoserine; by PKB/AKT1. Ser-237 is modified (phosphoserine). The PID domain maps to 246–404; sequence FRKELQDGGL…LHKLCERIEG (159 aa). At Ser-503 the chain carries Phosphoserine. Phosphothreonine; by PKB/AKT1 is present on Thr-505. Phosphoserine occurs at positions 507, 525, and 527. The segment covering 532–542 has biased composition (low complexity); that stretch reads SSLSSTLSNTS. 2 disordered regions span residues 532–551 and 564–587; these read SSLSSTLSNTSKEPSVCEKE and GSSEDLSSDSESHLPEEPAPLSPQ. 5 positions are modified to phosphoserine: Ser-565, Ser-566, Ser-570, Ser-571, and Ser-585. Position 596 is a phosphothreonine (Thr-596). A Phosphoserine modification is found at Ser-614. Residue Ser-627 is modified to Phosphoserine; by PKB/AKT1. Disordered regions lie at residues 628–658 and 678–717; these read VSTETPHERKDFESKANHLGDSGGTPVKTRR and SSSRYEDYSELGELPPRSPLEPVCEDGPFGPPPEEKKRTS. Over residues 632–645 the composition is skewed to basic and acidic residues; that stretch reads TPHERKDFESKANH. Phosphoserine is present on residues Ser-695 and Ser-941. The region spanning 800-994 is the Rab-GAP TBC domain; sequence GVPRHHRGEI…RVFDMIFLQG (195 aa). Position 952 is a phosphotyrosine (Tyr-952). The residue at position 1131 (Thr-1131) is a Phosphothreonine. Residues 1145-1159 are compositionally biased toward basic and acidic residues; the sequence is ELRRRSAEPSDREPE. The tract at residues 1145-1168 is disordered; that stretch reads ELRRRSAEPSDREPECTQPEPTGD.

As to quaternary structure, interacts with APPL2 (via BAR domain); interaction is dependent of TBC1D1 phosphorylation at Ser-235; interaction diminishes the phosphorylation of TBC1D1 at Thr-596, resulting in inhibition of SLC2A4/GLUT4 translocation and glucose uptake. In terms of processing, insulin-stimulated phosphorylation by AKT family kinases stimulates SLC2A4/GLUT4 translocation.

It localises to the nucleus. May act as a GTPase-activating protein for Rab family protein(s). May play a role in the cell cycle and differentiation of various tissues. Involved in the trafficking and translocation of GLUT4-containing vesicles and insulin-stimulated glucose uptake into cells. This Homo sapiens (Human) protein is TBC1 domain family member 1 (TBC1D1).